Reading from the N-terminus, the 35-residue chain is Photosystem II reaction center protein T (35 aa).

Residues 3 to 23 traverse the membrane as a helical segment; the sequence is ALVYTFLLISTLGIIFFAIFF.

It belongs to the PsbT family. As to quaternary structure, PSII is composed of 1 copy each of membrane proteins PsbA, PsbB, PsbC, PsbD, PsbE, PsbF, PsbH, PsbI, PsbJ, PsbK, PsbL, PsbM, PsbT, PsbY, PsbZ, Psb30/Ycf12, at least 3 peripheral proteins of the oxygen-evolving complex and a large number of cofactors. It forms dimeric complexes.

It is found in the plastid. Its subcellular location is the chloroplast thylakoid membrane. Functionally, found at the monomer-monomer interface of the photosystem II (PS II) dimer, plays a role in assembly and dimerization of PSII. PSII is a light-driven water plastoquinone oxidoreductase, using light energy to abstract electrons from H(2)O, generating a proton gradient subsequently used for ATP formation. The protein is Photosystem II reaction center protein T of Welwitschia mirabilis (Tree tumbo).